Consider the following 218-residue polypeptide: Adenylate kinase (218 aa).

G10–T15 contacts ATP. Positions S30 to V59 are NMP. AMP contacts are provided by residues T31, R36, G57–V59, G85–R88, and Q92. The tract at residues G122 to D159 is LID. Residues R123 and V132–Y133 contribute to the ATP site. The AMP site is built by R156 and R167. G203 is an ATP binding site.

It belongs to the adenylate kinase family. As to quaternary structure, monomer.

It localises to the cytoplasm. It catalyses the reaction AMP + ATP = 2 ADP. Its pathway is purine metabolism; AMP biosynthesis via salvage pathway; AMP from ADP: step 1/1. Its function is as follows. Catalyzes the reversible transfer of the terminal phosphate group between ATP and AMP. Plays an important role in cellular energy homeostasis and in adenine nucleotide metabolism. The sequence is that of Adenylate kinase from Legionella pneumophila (strain Lens).